Here is a 533-residue protein sequence, read N- to C-terminus: GMP synthase [glutamine-hydrolyzing] (533 aa).

One can recognise a Glutamine amidotransferase type-1 domain in the interval 25-215; it reads SIVIFDFGSQ…VFNICKCHAN (191 aa). Cys102 acts as the Nucleophile in catalysis. Active-site residues include His189 and Glu191. The region spanning 216–408 is the GMPS ATP-PPase domain; it reads WTMGNYIQES…LGLPDEMIWR (193 aa). 243-249 contributes to the ATP binding site; sequence SGGVDSA.

In terms of assembly, homodimer.

It catalyses the reaction XMP + L-glutamine + ATP + H2O = GMP + L-glutamate + AMP + diphosphate + 2 H(+). The protein operates within purine metabolism; GMP biosynthesis; GMP from XMP (L-Gln route): step 1/1. Its function is as follows. Catalyzes the synthesis of GMP from XMP. This chain is GMP synthase [glutamine-hydrolyzing], found in Dehalococcoides mccartyi (strain CBDB1).